A 250-amino-acid polypeptide reads, in one-letter code: 5'-nucleotidase SurE (250 aa).

Residues D8, D9, S39, and N91 each contribute to the a divalent metal cation site.

Belongs to the SurE nucleotidase family. It depends on a divalent metal cation as a cofactor.

Its subcellular location is the cytoplasm. The catalysed reaction is a ribonucleoside 5'-phosphate + H2O = a ribonucleoside + phosphate. In terms of biological role, nucleotidase that shows phosphatase activity on nucleoside 5'-monophosphates. The chain is 5'-nucleotidase SurE from Leptospira borgpetersenii serovar Hardjo-bovis (strain L550).